We begin with the raw amino-acid sequence, 158 residues long: Secreted frizzled-related protein 1 (158 aa).

Positions 1-34 (VRDSCEPVMQFFGFYWPEMLKCDKFPEGDVCIAM) constitute an FZ domain. An N-linked (GlcNAc...) asparagine glycan is attached at Asn38. 2 disulfide bridges follow: Cys51–Cys121 and Cys68–Cys123. The 108-residue stretch at 51-158 (CPPCDNELKS…IHKWDKKNKE (108 aa)) folds into the NTR domain.

This sequence belongs to the secreted frizzled-related protein (sFRP) family. In terms of assembly, interacts with WNT4, WNT1, WNT2, WNT8, MYOC and FRZD6.

It is found in the secreted. Soluble frizzled-related proteins (sFRPS) function as modulators of Wnt signaling through direct interaction with Wnts. They have a role in regulating cell growth and differentiation in specific cell types. SFRP1 decreases intracellular beta-catenin levels. Has antiproliferative effects on vascular cells, in vitro and in vivo, and can induce, in vivo, an angiogenic response. In vascular cell cycle, delays the G1 phase and entry into the S phase. In kidney development, inhibits tubule formation and bud growth in metanephroi. Inhibits WNT1/WNT4-mediated TCF-dependent transcription. The sequence is that of Secreted frizzled-related protein 1 (Sfrp1) from Rattus norvegicus (Rat).